Here is a 514-residue protein sequence, read N- to C-terminus: Serine--tRNA ligase, cytoplasmic (514 aa).

M1 carries the N-acetylmethionine modification. Residues 9–61 form an interaction with tRNA region; the sequence is RVDKGGDPALIRETQEKRFKDPGLVDQLVKADSEWRRCRFRADNLNKLKNLCS. A Phosphoserine modification is found at S241. Residues T271 and R302 each coordinate L-serine. ATP-binding positions include 302-304 and 318-321; these read RQE and VHQF. At K323 the chain carries N6-acetyllysine. E325 provides a ligand contact to L-serine. 391 to 394 contacts ATP; sequence ELVS. N427 lines the L-serine pocket. Residues 472–514 form a disordered region; that stretch reads KPAPIDQEPSKKQKKQHEGSKKKAAARDVTLENRLQNMEVTDA. Over residues 479–502 the composition is skewed to basic and acidic residues; the sequence is EPSKKQKKQHEGSKKKAAARDVTL. Positions 482–494 match the Nuclear localization signal motif; that stretch reads KKQKKQHEGSKKK. Residues 504 to 514 are compositionally biased toward polar residues; sequence NRLQNMEVTDA.

This sequence belongs to the class-II aminoacyl-tRNA synthetase family. Type-1 seryl-tRNA synthetase subfamily. In terms of assembly, homodimer. The tRNA molecule may bind across the dimer. Interacts with SIRT2. Interacts with METTL6; interaction is required for the tRNA N(3)-methylcytidine methyltransferase activity of METTL6.

It localises to the cytoplasm. The protein resides in the nucleus. It catalyses the reaction tRNA(Ser) + L-serine + ATP = L-seryl-tRNA(Ser) + AMP + diphosphate + H(+). The catalysed reaction is tRNA(Sec) + L-serine + ATP = L-seryl-tRNA(Sec) + AMP + diphosphate + H(+). It participates in aminoacyl-tRNA biosynthesis; selenocysteinyl-tRNA(Sec) biosynthesis; L-seryl-tRNA(Sec) from L-serine and tRNA(Sec): step 1/1. Its function is as follows. Catalyzes the attachment of serine to tRNA(Ser) in a two-step reaction: serine is first activated by ATP to form Ser-AMP and then transferred to the acceptor end of tRNA(Ser). Is probably also able to aminoacylate tRNA(Sec) with serine, to form the misacylated tRNA L-seryl-tRNA(Sec), which will be further converted into selenocysteinyl-tRNA(Sec). In the nucleus, binds to the VEGFA core promoter and prevents MYC binding and transcriptional activation by MYC. Recruits SIRT2 to the VEGFA promoter, promoting deacetylation of histone H4 at 'Lys-16' (H4K16). Thereby, inhibits the production of VEGFA and sprouting angiogenesis mediated by VEGFA. The polypeptide is Serine--tRNA ligase, cytoplasmic (SARS1) (Oryctolagus cuniculus (Rabbit)).